Consider the following 283-residue polypeptide: Tyrosine recombinase THA_404 (283 aa).

The 86-residue stretch at 1–86 (MDKVIEMFSD…SLNSFFNYLE (86 aa)) folds into the Core-binding (CB) domain. The 175-residue stretch at 107 to 281 (KIPDFLTEDE…ADQEKFDAVK (175 aa)) folds into the Tyr recombinase domain. Catalysis depends on residues Arg145, Lys170, His233, Arg236, and His259. Tyr268 acts as the O-(3'-phospho-DNA)-tyrosine intermediate in catalysis.

It belongs to the 'phage' integrase family.

The protein localises to the cytoplasm. In terms of biological role, site-specific tyrosine recombinase, which acts by catalyzing the cutting and rejoining of the recombining DNA molecules. In Thermosipho africanus (strain TCF52B), this protein is Tyrosine recombinase THA_404.